Here is a 268-residue protein sequence, read N- to C-terminus: 4-hydroxy-tetrahydrodipicolinate reductase (268 aa).

Gly8–Met13 is an NAD(+) binding site. Residue Arg36 coordinates NADP(+). NAD(+)-binding positions include Gly99 to Thr101 and Ala123 to Phe126. The active-site Proton donor/acceptor is the His156. A (S)-2,3,4,5-tetrahydrodipicolinate-binding site is contributed by His157. The Proton donor role is filled by Lys160. Gly166–Thr167 is a binding site for (S)-2,3,4,5-tetrahydrodipicolinate.

This sequence belongs to the DapB family.

The protein localises to the cytoplasm. It catalyses the reaction (S)-2,3,4,5-tetrahydrodipicolinate + NAD(+) + H2O = (2S,4S)-4-hydroxy-2,3,4,5-tetrahydrodipicolinate + NADH + H(+). The enzyme catalyses (S)-2,3,4,5-tetrahydrodipicolinate + NADP(+) + H2O = (2S,4S)-4-hydroxy-2,3,4,5-tetrahydrodipicolinate + NADPH + H(+). Its pathway is amino-acid biosynthesis; L-lysine biosynthesis via DAP pathway; (S)-tetrahydrodipicolinate from L-aspartate: step 4/4. Functionally, catalyzes the conversion of 4-hydroxy-tetrahydrodipicolinate (HTPA) to tetrahydrodipicolinate. The protein is 4-hydroxy-tetrahydrodipicolinate reductase of Pseudomonas fluorescens (strain SBW25).